The sequence spans 120 residues: Large ribosomal subunit protein bL20 (120 aa).

This sequence belongs to the bacterial ribosomal protein bL20 family.

In terms of biological role, binds directly to 23S ribosomal RNA and is necessary for the in vitro assembly process of the 50S ribosomal subunit. It is not involved in the protein synthesizing functions of that subunit. This chain is Large ribosomal subunit protein bL20, found in Cereibacter sphaeroides (strain ATCC 17025 / ATH 2.4.3) (Rhodobacter sphaeroides).